Consider the following 350-residue polypeptide: 2-oxoglutarate-dependent ethylene/succinate-forming enzyme (350 aa).

Positions 166–286 (GWHHMRVLRF…RFACAYFHEP (121 aa)) constitute a Fe2OG dioxygenase domain. 2 residues coordinate Fe cation: histidine 189 and histidine 268.

The protein belongs to the iron/ascorbate-dependent oxidoreductase family. In terms of assembly, monomer. It depends on Fe(2+) as a cofactor.

It catalyses the reaction 2-oxoglutarate + O2 + 2 H(+) = ethene + 3 CO2 + H2O. The enzyme catalyses L-arginine + 2-oxoglutarate + O2 = guanidine + L-glutamate 5-semialdehyde + succinate + CO2. Its pathway is alkene biosynthesis; ethylene biosynthesis via 2-oxoglutarate. Simultaneously catalyzes two reactions, namely formation of ethylene and of succinate from 2-oxoglutarate. This Pseudomonas amygdali pv. sesami (Pseudomonas syringae pv. sesami) protein is 2-oxoglutarate-dependent ethylene/succinate-forming enzyme (efe).